Consider the following 466-residue polypeptide: Asparagine--tRNA ligase (466 aa).

The protein belongs to the class-II aminoacyl-tRNA synthetase family. In terms of assembly, homodimer.

The protein localises to the cytoplasm. The enzyme catalyses tRNA(Asn) + L-asparagine + ATP = L-asparaginyl-tRNA(Asn) + AMP + diphosphate + H(+). The sequence is that of Asparagine--tRNA ligase from Vibrio cholerae serotype O1 (strain ATCC 39315 / El Tor Inaba N16961).